The chain runs to 439 residues: Protein disulfide-isomerase A6 (439 aa).

The N-terminal stretch at methionine 1–glycine 19 is a signal peptide. 2 Thioredoxin domains span residues leucine 20–glutamine 133 and glutamine 151–alanine 287. Catalysis depends on nucleophile residues cysteine 55 and cysteine 58. A disulfide bond links cysteine 55 and cysteine 58. Residues serine 129, serine 156, and serine 158 each carry the phosphoserine modification. Residues glycine 141–lysine 160 form a disordered region. Catalysis depends on nucleophile residues cysteine 190 and cysteine 193. Cysteine 190 and cysteine 193 are oxidised to a cystine. Residues glycine 400–aspartate 425 form a disordered region. A Phosphoserine modification is found at serine 427. The Prevents secretion from ER motif lies at lysine 436–leucine 439.

It belongs to the protein disulfide isomerase family. In terms of assembly, part of a large chaperone multiprotein complex comprising DNAJB11, HSP90B1, HSPA5, HYOU, PDIA2, PDIA4, PDIA6, PPIB, SDF2L1, UGGT1 and very small amounts of ERP29, but not, or at very low levels, CALR nor CANX. Interacts with MICA on the surface of tumor cells, leading to MICA disulfide bond reduction which is required for its release from tumor cells. Interacts with ITGB3 following platelet stimulation. Interacts with ERN1; the interaction is direct. Interacts with EIF2AK3. In terms of tissue distribution, expressed most abundantly in lung and kidney, followed by heart, liver and brain.

It localises to the endoplasmic reticulum lumen. Its subcellular location is the cell membrane. It is found in the melanosome. It catalyses the reaction Catalyzes the rearrangement of -S-S- bonds in proteins.. May function as a chaperone that inhibits aggregation of misfolded proteins. Negatively regulates the unfolded protein response (UPR) through binding to UPR sensors such as ERN1, which in turn inactivates ERN1 signaling. May also regulate the UPR via the EIF2AK3 UPR sensor. Plays a role in platelet aggregation and activation by agonists such as convulxin, collagen and thrombin. The chain is Protein disulfide-isomerase A6 (PDIA6) from Mesocricetus auratus (Golden hamster).